We begin with the raw amino-acid sequence, 559 residues long: Glycerol kinase (559 aa).

T20 serves as a coordination point for ADP. Residues T20, S21, and S22 each contribute to the ATP site. T20 contributes to the sn-glycerol 3-phosphate binding site. R24 contributes to the ADP binding site. The sn-glycerol 3-phosphate site is built by R94, E95, and Y148. 3 residues coordinate glycerol: R94, E95, and Y148. G252 provides a ligand contact to beta-D-fructose 1,6-bisphosphate. Residue D265 coordinates sn-glycerol 3-phosphate. Positions 265 and 266 each coordinate glycerol. ADP is bound by residues T287, G332, G433, and N437. ATP-binding residues include T287, G332, and G433. The helical transmembrane segment at 532–552 threads the bilayer; sequence IFCSLPLGFFIVSSMVMLIGA.

It belongs to the FGGY kinase family. As to expression, widely expressed in fetal and adult tissues. The sole isoform expressed in adult liver and kidney.

It is found in the mitochondrion outer membrane. It localises to the nucleus. Its subcellular location is the cytoplasm. The protein localises to the cytosol. The catalysed reaction is glycerol + ATP = sn-glycerol 3-phosphate + ADP + H(+). Its pathway is polyol metabolism; glycerol degradation via glycerol kinase pathway; sn-glycerol 3-phosphate from glycerol: step 1/1. Its activity is regulated as follows. Potassium and magnesium-dependent. Its function is as follows. Kinase that plays a key role in glycerol metabolism, catalyzing its phosphorylation to produce sn-glycerol 3-phosphate. Sn-glycerol 3-phosphate is a crucial intermediate in various metabolic pathways, such as the synthesis of glycerolipids and triglycerides, glycogenesis, glycolysis and gluconeogenesis. This chain is Glycerol kinase, found in Homo sapiens (Human).